Reading from the N-terminus, the 518-residue chain is MARAKRVKRDSATNIYRTCKQAGTCPPDVINKVESTTIADKILQYGSAGVFFGGLGISTGKGTGGTTGYVPLGEGPSVRVGGTPTVIRPALVPDTIGPSDIIPVDTLNPVEPSTSSIVPLTESTGPDLLPGEVETIAEIHPGPSRPPTDTPVTSTTSGSSAVLEVAPEPTPPARVRVSRTQYHNPSFQIITESTPTLGESSLADHIVVTSGSGGQAIGGMTPELIELQDFPSRYSFEIEEPTPPRRTSTPMQRLQNVFRRRGGLTNRRLVQQVPVDNPLFLTQPSRLVRFQFDNPVFEEEVTQIFEQDLDTFNEPPDRDFLDVQSLGRPQYSETPAGYVRVSRAGQRRTIRTRSGAQIGSQVHFYRDLSSIDTEDPIELQLLGQHSGDATIVQGPVESTFVDINVDENPLSEISAYSDDLLLDEANEDFSGSQLVVGGRRSTSTYTVPHFETTRSSSYYVQDTKGYYVAYPEDRDVSKDIIYPNPDLPVVIIHTYDTSGDFYLHPSLTKRLKRKRKYL.

Positions 1 to 10 (MARAKRVKRD) match the Nuclear localization signal motif. Cys-19 and Cys-25 are joined by a disulfide. A disordered region spans residues 139-173 (IHPGPSRPPTDTPVTSTTSGSSAVLEVAPEPTPPA). Over residues 150–160 (TPVTSTTSGSS) the composition is skewed to low complexity. Positions 509–517 (KRLKRKRKY) match the Nuclear localization signal motif.

This sequence belongs to the papillomaviridae L2 protein family. Interacts with major capsid protein L1. Interacts with E2; this interaction inhibits E2 transcriptional activity but not the DNA replication function E2. Interacts with host GADD45GIP1. Interacts with host HSPA8; this interaction is required for L2 nuclear translocation. Interacts with host importins KPNB2 and KPNB3. Forms a complex with importin alpha2-beta1 heterodimers via interaction with the importin alpha2 adapter. Interacts with host DYNLT1; this interaction is essential for virus intracellular transport during entry. Interacts (via C-terminus) with host retromer subunits VPS35 and VPS29. Highly phosphorylated.

The protein resides in the virion. It localises to the host nucleus. It is found in the host early endosome. The protein localises to the host Golgi apparatus. Functionally, minor protein of the capsid that localizes along the inner surface of the virion, within the central cavities beneath the L1 pentamers. Plays a role in capsid stabilization through interaction with the major capsid protein L1. Once the virion enters the host cell, L2 escorts the genomic DNA into the nucleus by promoting escape from the endosomal compartments and traffic through the host Golgi network. Mechanistically, the C-terminus of L2 possesses a cell-penetrating peptide that protudes from the host endosome, interacts with host cytoplasmic retromer cargo and thereby mediates the capsid delivery to the host trans-Golgi network. Plays a role through its interaction with host dynein in the intracellular microtubule-dependent transport of viral capsid toward the nucleus. Mediates the viral genome import into the nucleus through binding to host importins. Once within the nucleus, L2 localizes viral genomes to host PML bodies in order to activate early gene expression for establishment of infection. Later on, promotes late gene expression by interacting with the viral E2 protein and by inhibiting its transcriptional activation functions. During virion assembly, encapsidates the genome by direct interaction with the viral DNA. The protein is Minor capsid protein L2 of Human papillomavirus 20.